A 142-amino-acid chain; its full sequence is MAKKVTGYLKLQVPAGAANPSPPIGPALGQRGLNIMEFCKAFNAQTQKEEKNTPIPVVITIYADRSFTFEMKTPPMSYFLKQAAKIQSGSKLPGRDFAGKVTSAQVREIAEKKMKDLNCDTVESAMRMVEGSARSMGLRVEG.

Part of the ribosomal stalk of the 50S ribosomal subunit. Interacts with L10 and the large rRNA to form the base of the stalk. L10 forms an elongated spine to which L12 dimers bind in a sequential fashion forming a multimeric L10(L12)X complex. Lys-40 is trimethylated or acetylated; other modifications may also exist.

Its function is as follows. Forms part of the ribosomal stalk which helps the ribosome interact with GTP-bound translation factors. In Rhodopseudomonas palustris (strain ATCC BAA-98 / CGA009), this protein is Large ribosomal subunit protein uL11.